The sequence spans 275 residues: Activator of basal transcription 1 (275 aa).

N-acetylmethionine is present on Met-1. Acidic residues-rich tracts occupy residues 1–10 (MEVEGLELDT) and 25–34 (AEEEQEESED). The interval 1–39 (MEVEGLELDTAELGPLEGSHQKLEAEEEQEESEDAAGGS) is disordered. The RRM domain maps to 46–145 (GIVYLGHIPP…RRRSPFRYDL (100 aa)). A coiled-coil region spans residues 164 to 194 (AFERQVRRQRLRAEVAQAKRETDFYLRSVER). A disordered region spans residues 200–275 (AADGDSTRPN…RGNSSPARNS (76 aa)). Polar residues predominate over residues 262–275 (PSESRGNSSPARNS).

This sequence belongs to the ESF2/ABP1 family. Interacts with ESF1/ABTAP. Interacts with IGHMBP2.

It is found in the nucleus. The protein localises to the nucleolus. Its function is as follows. Could be a novel TATA-binding protein (TBP) which can function as a basal transcription activator. Can act as a regulator of basal transcription for class II genes. This chain is Activator of basal transcription 1 (ABT1), found in Bos taurus (Bovine).